The chain runs to 405 residues: Enoyl-[acyl-carrier-protein] reductase [NADH] (405 aa).

Residues 48-53 (GASSGY), 74-75 (FE), 111-112 (DA), and 140-141 (LA) contribute to the NAD(+) site. Substrate is bound at residue Tyr226. The active-site Proton donor is Tyr236. Residues Lys245 and 274-276 (VVT) each bind NAD(+).

This sequence belongs to the TER reductase family. Monomer.

It carries out the reaction a 2,3-saturated acyl-[ACP] + NAD(+) = a (2E)-enoyl-[ACP] + NADH + H(+). The protein operates within lipid metabolism; fatty acid biosynthesis. Functionally, involved in the final reduction of the elongation cycle of fatty acid synthesis (FAS II). Catalyzes the reduction of a carbon-carbon double bond in an enoyl moiety that is covalently linked to an acyl carrier protein (ACP). In Xanthomonas oryzae pv. oryzae (strain PXO99A), this protein is Enoyl-[acyl-carrier-protein] reductase [NADH].